Here is a 407-residue protein sequence, read N- to C-terminus: Tyrosine--tRNA ligase (407 aa).

The 'HIGH' region motif lies at 47–56 (PTAPDLHLGA). A 'KMSKS' region motif is present at residues 231-235 (KMSKS). K234 provides a ligand contact to ATP. The S4 RNA-binding domain occupies 342-403 (PRLSQLLVQV…GKRHFARVAL (62 aa)).

This sequence belongs to the class-I aminoacyl-tRNA synthetase family. TyrS type 2 subfamily. As to quaternary structure, homodimer.

The protein resides in the cytoplasm. It carries out the reaction tRNA(Tyr) + L-tyrosine + ATP = L-tyrosyl-tRNA(Tyr) + AMP + diphosphate + H(+). In terms of biological role, catalyzes the attachment of tyrosine to tRNA(Tyr) in a two-step reaction: tyrosine is first activated by ATP to form Tyr-AMP and then transferred to the acceptor end of tRNA(Tyr). The sequence is that of Tyrosine--tRNA ligase from Acidithiobacillus ferrooxidans (Thiobacillus ferrooxidans).